The sequence spans 339 residues: Uricase (339 aa).

Residues lysine 33 and threonine 78 each act as charge relay system in the active site. Residues threonine 78, aspartate 79, phenylalanine 201, arginine 218, valine 266, glutamine 267, and asparagine 293 each contribute to the urate site. Histidine 295 functions as the Charge relay system in the catalytic mechanism. A Microbody targeting signal motif is present at residues serine 337–leucine 339.

It belongs to the uricase family.

The protein localises to the peroxisome. It catalyses the reaction urate + O2 + H2O = 5-hydroxyisourate + H2O2. The protein operates within purine metabolism; urate degradation; (S)-allantoin from urate: step 1/3. In terms of biological role, catalyzes the oxidation of uric acid to 5-hydroxyisourate, which is further processed to form (S)-allantoin. The sequence is that of Uricase (Uro) from Drosophila subobscura (Fruit fly).